The primary structure comprises 128 residues: MVLPKHMRLKGHRCFDFIYKEGSRFYSSSMVLRVTDANKKPQVKGKQSKTRHSIKCAISISNKVSKKSVTRNKLRRLFHHHLSLRLSNMACDNEIWAFISLKPSCMKNPDSTLLKECDKLLTKAGITK.

The protein belongs to the RnpA family. As to quaternary structure, consists of a catalytic RNA component (M1 or rnpB) and a protein subunit.

It catalyses the reaction Endonucleolytic cleavage of RNA, removing 5'-extranucleotides from tRNA precursor.. Its function is as follows. RNaseP catalyzes the removal of the 5'-leader sequence from pre-tRNA to produce the mature 5'-terminus. It can also cleave other RNA substrates such as 4.5S RNA. The protein component plays an auxiliary but essential role in vivo by binding to the 5'-leader sequence and broadening the substrate specificity of the ribozyme. This is Ribonuclease P protein component from Prochlorococcus marinus (strain NATL2A).